The chain runs to 286 residues: Bifunctional protein FolD (286 aa).

NADP(+)-binding positions include 163–165 (GMS), Ile188, and Ile229.

The protein belongs to the tetrahydrofolate dehydrogenase/cyclohydrolase family. Homodimer.

It carries out the reaction (6R)-5,10-methylene-5,6,7,8-tetrahydrofolate + NADP(+) = (6R)-5,10-methenyltetrahydrofolate + NADPH. The catalysed reaction is (6R)-5,10-methenyltetrahydrofolate + H2O = (6R)-10-formyltetrahydrofolate + H(+). Its pathway is one-carbon metabolism; tetrahydrofolate interconversion. Catalyzes the oxidation of 5,10-methylenetetrahydrofolate to 5,10-methenyltetrahydrofolate and then the hydrolysis of 5,10-methenyltetrahydrofolate to 10-formyltetrahydrofolate. The sequence is that of Bifunctional protein FolD from Helicobacter hepaticus (strain ATCC 51449 / 3B1).